The following is a 463-amino-acid chain: tRNA-2-methylthio-N(6)-dimethylallyladenosine synthase (463 aa).

Positions 19–135 (GSYWITTFGC…LESLLNQVDS (117 aa)) constitute an MTTase N-terminal domain. Residues C28, C64, C98, C170, C174, and C177 each contribute to the [4Fe-4S] cluster site. The Radical SAM core domain occupies 156-393 (RDSSFCGWVN…NSLVENIAKE (238 aa)). The 68-residue stretch at 396–463 (QRYKNTSQEI…RPFSLTAKLL (68 aa)) folds into the TRAM domain.

This sequence belongs to the methylthiotransferase family. MiaB subfamily. In terms of assembly, monomer. Requires [4Fe-4S] cluster as cofactor.

It localises to the cytoplasm. It catalyses the reaction N(6)-dimethylallyladenosine(37) in tRNA + (sulfur carrier)-SH + AH2 + 2 S-adenosyl-L-methionine = 2-methylsulfanyl-N(6)-dimethylallyladenosine(37) in tRNA + (sulfur carrier)-H + 5'-deoxyadenosine + L-methionine + A + S-adenosyl-L-homocysteine + 2 H(+). Catalyzes the methylthiolation of N6-(dimethylallyl)adenosine (i(6)A), leading to the formation of 2-methylthio-N6-(dimethylallyl)adenosine (ms(2)i(6)A) at position 37 in tRNAs that read codons beginning with uridine. The protein is tRNA-2-methylthio-N(6)-dimethylallyladenosine synthase of Prochlorococcus marinus (strain NATL1A).